The sequence spans 213 residues: Inactive ribonuclease-like protein 10 (213 aa).

The N-terminal stretch at 1–24 (MKLTLVQFFFMMLLLLLGLGVGLG) is a signal peptide. N-linked (GlcNAc...) asparagine glycosylation is present at Asn-128.

The protein belongs to the pancreatic ribonuclease family. In terms of processing, the N-terminus is blocked. Glycosylated. In terms of tissue distribution, male-specific expression in proximal caput of the epididymis.

The protein resides in the secreted. Its function is as follows. Secreted proximal epididymal protein required for post-testicular sperm maturation and male fertility. May be involved in sperm adhesion to the egg zona pellucida. Does not have ribonuclease activity. In Sus scrofa (Pig), this protein is Inactive ribonuclease-like protein 10 (RNASE10).